Reading from the N-terminus, the 155-residue chain is SsrA-binding protein (155 aa).

A disordered region spans residues 135-155 (KRQDIKQRDVERETRREIMRH).

This sequence belongs to the SmpB family.

The protein localises to the cytoplasm. In terms of biological role, required for rescue of stalled ribosomes mediated by trans-translation. Binds to transfer-messenger RNA (tmRNA), required for stable association of tmRNA with ribosomes. tmRNA and SmpB together mimic tRNA shape, replacing the anticodon stem-loop with SmpB. tmRNA is encoded by the ssrA gene; the 2 termini fold to resemble tRNA(Ala) and it encodes a 'tag peptide', a short internal open reading frame. During trans-translation Ala-aminoacylated tmRNA acts like a tRNA, entering the A-site of stalled ribosomes, displacing the stalled mRNA. The ribosome then switches to translate the ORF on the tmRNA; the nascent peptide is terminated with the 'tag peptide' encoded by the tmRNA and targeted for degradation. The ribosome is freed to recommence translation, which seems to be the essential function of trans-translation. The protein is SsrA-binding protein of Oleidesulfovibrio alaskensis (strain ATCC BAA-1058 / DSM 17464 / G20) (Desulfovibrio alaskensis).